Consider the following 423-residue polypeptide: Adenylosuccinate synthetase (423 aa).

Residues 12-18 (GDEGKGK) and 40-42 (GHT) contribute to the GTP site. The active-site Proton acceptor is D13. Residues D13 and G40 each coordinate Mg(2+). Residues 13–16 (DEGK), 38–41 (NAGH), T128, R142, Q223, T238, and R302 each bind IMP. The active-site Proton donor is the H41. 298 to 304 (TTTGRPR) contributes to the substrate binding site. Residues R304, 330–332 (RLD), and 412–414 (CIG) contribute to the GTP site.

The protein belongs to the adenylosuccinate synthetase family. In terms of assembly, homodimer. Requires Mg(2+) as cofactor.

Its subcellular location is the cytoplasm. The catalysed reaction is IMP + L-aspartate + GTP = N(6)-(1,2-dicarboxyethyl)-AMP + GDP + phosphate + 2 H(+). It functions in the pathway purine metabolism; AMP biosynthesis via de novo pathway; AMP from IMP: step 1/2. Plays an important role in the de novo pathway of purine nucleotide biosynthesis. Catalyzes the first committed step in the biosynthesis of AMP from IMP. The sequence is that of Adenylosuccinate synthetase from Dehalococcoides mccartyi (strain ATCC BAA-2100 / JCM 16839 / KCTC 5957 / BAV1).